The following is a 523-amino-acid chain: MGKKQHQKDKLYLTTSEWKSIGGHKDDTGTRLQRAQFKRLPINHCSLSLLPFEDPVCARSGEIFDLTAIVPYLKKHGKNPCTGKPLVAKDLIHLKFDKGEDGKFRCPVTFRTFTDHSHILAIATSGNVYSHEAVQELNLKRNHLKDLLTDVPFTRADIIDLQDPNHLEKFNMEQFLHVKLDLKTSEEIKKEKDAMKDPKFYIRRMNNACKSVLDQLDKEYVPKKSSTETDETADEINAAHYSQGKVAAGFTSTVMAPVTSNKAAVLDNDTVRYSRVKKNAFVRLVTNFGPLNLELFAPKVPKACENFITHCSNGYYNNTKFHRLIKNFMLQGGDPTGTGHGGESIWDKPFSDEFISGFSHDARGVLSMANKGSNTNGSQFFITFRPCKYLDRKHTIFGRLVGGQDTLTTIEKLETEEGTDVPMVSVVIMRAEVFVDPFEEAEKEVQAERAEILKKTSKDAASLANKKAKETATKPEAVGTGVGKYMKSAAAVNKRQGKMEDVPLEAAKKTKFARAGLGDFSKW.

Positions 38–111 constitute a U-box domain; it reads KRLPINHCSL…GKFRCPVTFR (74 aa). The region spanning 278–433 is the PPIase cyclophilin-type domain; the sequence is KNAFVRLVTN…VSVVIMRAEV (156 aa).

This sequence belongs to the cyclophilin-type PPIase family. PPIL2 subfamily. Interacts with mep-1. In terms of tissue distribution, exclusively in the larval body wall striated muscle cells.

The protein localises to the nucleus. The enzyme catalyses [protein]-peptidylproline (omega=180) = [protein]-peptidylproline (omega=0). The catalysed reaction is S-ubiquitinyl-[E2 ubiquitin-conjugating enzyme]-L-cysteine + [acceptor protein]-L-lysine = [E2 ubiquitin-conjugating enzyme]-L-cysteine + N(6)-ubiquitinyl-[acceptor protein]-L-lysine.. It participates in protein modification; protein ubiquitination. Functionally, may catalyze the cis-trans isomerization of proline imidic peptide bonds in oligopeptides thereby assisting the folding of proteins. May also function as a chaperone, playing a role in intracellular transport of proteins. May also have a protein ubiquitin ligase activity acting as an E3 ubiquitin protein ligase or as a ubiquitin-ubiquitin ligase promoting elongation of ubiquitin chains on proteins. Influences the hermaphrodite switch from spermatogenesis to oogenesis. Required for body wall muscle cell development. This Caenorhabditis elegans protein is Peptidyl-prolyl cis-trans isomerase 4 (cyn-4).